The chain runs to 145 residues: Large ribosomal subunit protein uL13 (145 aa).

Belongs to the universal ribosomal protein uL13 family. Part of the 50S ribosomal subunit.

This protein is one of the early assembly proteins of the 50S ribosomal subunit, although it is not seen to bind rRNA by itself. It is important during the early stages of 50S assembly. This chain is Large ribosomal subunit protein uL13, found in Bacillus mycoides (strain KBAB4) (Bacillus weihenstephanensis).